Here is a 177-residue protein sequence, read N- to C-terminus: R-phycoerythrin beta chain (177 aa).

The phycourobilin site is built by Cys-50 and Cys-61. The residue at position 72 (Asn-72) is an N4-methylasparagine. (2R,3E)-phycoerythrobilin contacts are provided by Cys-82 and Cys-158.

It belongs to the phycobiliprotein family. In terms of assembly, heterodimer of an alpha and a beta chain. Post-translationally, contains two covalently linked phycoerythrobilin chromophores and one covalently linked phycourobilin chromophore.

It is found in the plastid. Its subcellular location is the chloroplast thylakoid membrane. In terms of biological role, light-harvesting photosynthetic bile pigment-protein from the phycobiliprotein complex. The chain is R-phycoerythrin beta chain (cpeB) from Porphyra purpurea (Red seaweed).